The chain runs to 679 residues: Single-strand DNA endonuclease ASTE1 (679 aa).

Positions 351-400 (TILPTQVENMQQPNAHRISQPIRQIIYGLLLNASPHLDKTSWNALPPQPL) are interaction with SHLD2. Residues 625–645 (RSNSKKKRQKKQNTSCSKNRG) form a disordered region. Residues 626 to 635 (SNSKKKRQKK) are compositionally biased toward basic residues.

This sequence belongs to the asteroid family. As to quaternary structure, interacts with SHLD1, SHLD2, SHLD3, RIF1 and MAD2L2/REV7.

Functionally, structure-specific DNA endonuclease that specifically cleaves single-stranded DNA and 3' overhang DNA. Contributes to the control of DNA double-strand break repair choice by antagonizing BRCA1-dependent homologous recombination (HR) and promoting non-homologous end-joining (NHEJ). Recruited to the single-stranded DNA ends by SHLD2 and cleaves the 3' exposed DNA ends, therefore inhibiting DNA end resection (necessary for HR) and promoting DNA end protection (necessary for NHEJ). This chain is Single-strand DNA endonuclease ASTE1 (ASTE1), found in Pongo abelii (Sumatran orangutan).